The following is a 288-amino-acid chain: Bifunctional protein FolD (288 aa).

NADP(+) contacts are provided by residues 166-168 (GAS) and Ile-232.

The protein belongs to the tetrahydrofolate dehydrogenase/cyclohydrolase family. As to quaternary structure, homodimer.

The enzyme catalyses (6R)-5,10-methylene-5,6,7,8-tetrahydrofolate + NADP(+) = (6R)-5,10-methenyltetrahydrofolate + NADPH. It catalyses the reaction (6R)-5,10-methenyltetrahydrofolate + H2O = (6R)-10-formyltetrahydrofolate + H(+). It participates in one-carbon metabolism; tetrahydrofolate interconversion. In terms of biological role, catalyzes the oxidation of 5,10-methylenetetrahydrofolate to 5,10-methenyltetrahydrofolate and then the hydrolysis of 5,10-methenyltetrahydrofolate to 10-formyltetrahydrofolate. The sequence is that of Bifunctional protein FolD from Shigella dysenteriae serotype 1 (strain Sd197).